A 508-amino-acid polypeptide reads, in one-letter code: UBX domain-containing protein 4 (508 aa).

Residues 1–200 are interaction with UBQLN1; it reads MLWFQGAIPA…PAEDLNIRVE (200 aa). At 1 to 413 the chain is on the cytoplasmic side; it reads MLWFQGAIPA…VHSSSGDIWT (413 aa). Composition is skewed to polar residues over residues 117-151 and 160-187; these read SETSVANGSQSESSVSTPSASFEPNNTCENSQSRN and TSDTKSDTATGGESAGHATSSQEPSGCS. The interval 117–196 is disordered; the sequence is SETSVANGSQ…SDQRPAEDLN (80 aa). The UBX domain occupies 315 to 393; the sequence is ERSTVARIQF…ELAPSASVVV (79 aa). The stretch at 414-434 is an intramembrane region; the sequence is LLGTVLYPFLAIWRLISNFLF. Residues 435 to 508 are Cytoplasmic-facing; it reads SNPPPTQTSV…TWNGNSTQQM (74 aa). Residues 440–508 are disordered; that stretch reads TQTSVRVTSS…TWNGNSTQQM (69 aa). Positions 441–458 are enriched in polar residues; it reads QTSVRVTSSEPPNPASSS. The segment covering 459-491 has biased composition (basic and acidic residues); sequence KSEKREPVRKRVLEKRGDDFKKEGKIYRLRTQD. At T489 the chain carries Phosphothreonine. Positions 498–508 are enriched in polar residues; that stretch reads NTWNGNSTQQM.

In terms of assembly, directly interacts with VCP. Interacts with UBQLN1. Forms a complex with VCP and UBQLN1.

Its subcellular location is the endoplasmic reticulum membrane. The protein localises to the nucleus envelope. Its function is as follows. Involved in endoplasmic reticulum-associated protein degradation (ERAD). Acts as a platform to recruit both UBQLN1 and VCP to the ER during ERAD. The protein is UBX domain-containing protein 4 (UBXN4) of Pongo abelii (Sumatran orangutan).